A 238-amino-acid polypeptide reads, in one-letter code: uncharacterized protein (238 aa).

7 helical membrane-spanning segments follow: residues 22–42, 49–69, 78–98, 105–125, 141–161, 166–186, and 208–228; these read VYGW…GLYA, LFSL…YIQA, AVMG…GTMV, FGGG…GLSA, ILML…VVSL, PLMY…LTVV, and LSLI…WYLL.

It belongs to the BI1 family.

It localises to the cell membrane. This is an uncharacterized protein from Chlamydia muridarum (strain MoPn / Nigg).